A 426-amino-acid polypeptide reads, in one-letter code: 3-phosphoshikimate 1-carboxyvinyltransferase (426 aa).

3-phosphoshikimate contacts are provided by Lys-22, Ser-23, and Arg-27. Lys-22 contributes to the phosphoenolpyruvate binding site. Phosphoenolpyruvate-binding residues include Gly-96 and Arg-124. Ser-170, Ser-171, Gln-172, Ser-198, Asp-314, Asn-337, and Lys-341 together coordinate 3-phosphoshikimate. Gln-172 is a binding site for phosphoenolpyruvate. Asp-314 functions as the Proton acceptor in the catalytic mechanism. 3 residues coordinate phosphoenolpyruvate: Arg-345, Arg-387, and Lys-412.

Belongs to the EPSP synthase family. Monomer.

The protein resides in the cytoplasm. The enzyme catalyses 3-phosphoshikimate + phosphoenolpyruvate = 5-O-(1-carboxyvinyl)-3-phosphoshikimate + phosphate. It functions in the pathway metabolic intermediate biosynthesis; chorismate biosynthesis; chorismate from D-erythrose 4-phosphate and phosphoenolpyruvate: step 6/7. Its function is as follows. Catalyzes the transfer of the enolpyruvyl moiety of phosphoenolpyruvate (PEP) to the 5-hydroxyl of shikimate-3-phosphate (S3P) to produce enolpyruvyl shikimate-3-phosphate and inorganic phosphate. This Shewanella sp. (strain ANA-3) protein is 3-phosphoshikimate 1-carboxyvinyltransferase.